We begin with the raw amino-acid sequence, 772 residues long: Mitochondrial intermediate peptidase (772 aa).

A mitochondrion-targeting transit peptide spans M1–L33. H556 is a Zn(2+) binding site. E557 is an active-site residue. The Zn(2+) site is built by H560 and H563.

Belongs to the peptidase M3 family. Zn(2+) serves as cofactor.

The protein resides in the mitochondrion matrix. It carries out the reaction Release of an N-terminal octapeptide as second stage of processing of some proteins imported into the mitochondrion.. Functionally, cleaves proteins, imported into the mitochondrion, to their mature size. While most mitochondrial precursor proteins are processed to the mature form in one step by mitochondrial processing peptidase (MPP), the sequential cleavage by MIP of an octapeptide after initial processing by MPP is a required step for a subgroup of nuclear-encoded precursor proteins destined for the matrix or the inner membrane. In Coprinopsis scobicola (Ink cap fungus), this protein is Mitochondrial intermediate peptidase (OCT1).